A 244-amino-acid chain; its full sequence is Phosphonates import ATP-binding protein PhnC 2 (244 aa).

The ABC transporter domain maps to 6–244 (IECHNLETAY…LQAQFVVNNQ (239 aa)). 41-48 (GLNGAGKS) contacts ATP.

It belongs to the ABC transporter superfamily. Phosphonates importer (TC 3.A.1.9.1) family. The complex is composed of two ATP-binding proteins (PhnC), two transmembrane proteins (PhnE) and a solute-binding protein (PhnD).

The protein resides in the cell inner membrane. It catalyses the reaction phosphonate(out) + ATP + H2O = phosphonate(in) + ADP + phosphate + H(+). Its function is as follows. Part of the ABC transporter complex PhnCDE involved in phosphonates import. Responsible for energy coupling to the transport system. The sequence is that of Phosphonates import ATP-binding protein PhnC 2 from Nostoc sp. (strain PCC 7120 / SAG 25.82 / UTEX 2576).